The following is a 202-amino-acid chain: Dephospho-CoA kinase (202 aa).

The 200-residue stretch at 3 to 202 (IFGLTGGIGS…ISHRSKYLSC (200 aa)) folds into the DPCK domain. 11 to 16 (GSGKSL) provides a ligand contact to ATP.

This sequence belongs to the CoaE family.

The protein localises to the cytoplasm. It carries out the reaction 3'-dephospho-CoA + ATP = ADP + CoA + H(+). It functions in the pathway cofactor biosynthesis; coenzyme A biosynthesis; CoA from (R)-pantothenate: step 5/5. Catalyzes the phosphorylation of the 3'-hydroxyl group of dephosphocoenzyme A to form coenzyme A. This Ehrlichia chaffeensis (strain ATCC CRL-10679 / Arkansas) protein is Dephospho-CoA kinase.